The primary structure comprises 984 residues: DNA polymerase (984 aa).

Residues 804-827 (DNPGKKRKSTDDNEGPSPKRRVIT) form a bipartite nuclear localization signal region. The monopartite nuclear localization signal stretch occupies residues 939-948 (CSVKRKRDDD). A disordered region spans residues 943-969 (RKRDDDDDNDDDDDDDCDSSDSENDTQ). The span at 947-966 (DDDDNDDDDDDDCDSSDSEN) shows a compositional bias: acidic residues.

It belongs to the DNA polymerase type-B family.

Its subcellular location is the host nucleus. The enzyme catalyses DNA(n) + a 2'-deoxyribonucleoside 5'-triphosphate = DNA(n+1) + diphosphate. Functionally, replicates the viral genome, host DNA polymerases cannot substitute for the viral enzyme in this process. The protein is DNA polymerase (POL) of Autographa californica nuclear polyhedrosis virus (AcMNPV).